The sequence spans 40 residues: Photosystem II reaction center protein J (40 aa).

Residues 8–28 form a helical membrane-spanning segment; sequence IPLWLIGTVTGILVIGLIGVF.

It belongs to the PsbJ family. In terms of assembly, PSII is composed of 1 copy each of membrane proteins PsbA, PsbB, PsbC, PsbD, PsbE, PsbF, PsbH, PsbI, PsbJ, PsbK, PsbL, PsbM, PsbT, PsbX, PsbY, PsbZ, Psb30/Ycf12, at least 3 peripheral proteins of the oxygen-evolving complex and a large number of cofactors. It forms dimeric complexes.

It localises to the plastid. It is found in the chloroplast thylakoid membrane. Functionally, one of the components of the core complex of photosystem II (PSII). PSII is a light-driven water:plastoquinone oxidoreductase that uses light energy to abstract electrons from H(2)O, generating O(2) and a proton gradient subsequently used for ATP formation. It consists of a core antenna complex that captures photons, and an electron transfer chain that converts photonic excitation into a charge separation. The sequence is that of Photosystem II reaction center protein J from Nymphaea alba (White water-lily).